The chain runs to 421 residues: Zinc finger protein Pegasus (421 aa).

Residues 35 to 55 (GDKEAETLQGAGTEGDQNGLD) form a disordered region. 3 C2H2-type zinc fingers span residues 82 to 104 (LKCR…IRIH), 110 to 132 (HRCH…MRSH), and 138 to 161 (YKCE…RRKH). Residues 229-238 (SMTKSSQTSG) are compositionally biased toward polar residues. Disordered regions lie at residues 229 to 249 (SMTK…LMVD) and 292 to 358 (QPAT…PTLP). Over residues 292–313 (QPATPAVVSSVSASIAQSSSPT) the composition is skewed to low complexity. The span at 339–351 (HTSTPSISNSQPS) shows a compositional bias: polar residues. 2 consecutive C2H2-type zinc fingers follow at residues 366-388 (HHCQ…MGCH) and 394-418 (FQCN…RGQH).

It belongs to the Ikaros C2H2-type zinc-finger protein family. In terms of assembly, probably self-associates.

The protein localises to the nucleus. Its function is as follows. Transcriptional repressor that binds the core 5'GNNTGTNG-3' DNA consensus sequence. This is Zinc finger protein Pegasus (IKZF5) from Gallus gallus (Chicken).